The sequence spans 406 residues: MLTLLPSLILLLSTLSLSTPANAGAAIAKAYYPGWGSDDFPLSKVTWSKYTHLTYAFAKTTKDGGLTLEGSNPGGLKPFVKAAHENGVKACFSIGGWTGSQYFSTAVSTPEKRTAFVKTIVDFAKKYDADCIDLNWEYPAKQGIGCNTIDKDDTPHFLSFLEELHAATELPISAAVGIVPFNDAAGNPITDVSGFAKVFEHIVIMNYDVWGPWGSTVGPNAPLNDTCAAPANQQGSAVSAVNAWIKAGMPAEKIVLGVPAYGHGFTVKKEDAFQKGSTTKLAKYPPFDNKNRPNGDKWDDKAGKDVCGNDNPAGGIFTFWGMVDNGYLKEDGTPKVPHRFDDCSKTPYVYNPDKQIMISYDDAKSMDHKGHFIKNFGLAGFSLWNAAGDYHDILVDAVRHGAGFKN.

Positions 1 to 23 are cleaved as a signal peptide; the sequence is MLTLLPSLILLLSTLSLSTPANA. Residues 26 to 405 enclose the GH18 domain; sequence AIAKAYYPGW…DAVRHGAGFK (380 aa). Residues tyrosine 138 and tryptophan 384 each contribute to the chitin site.

It belongs to the glycosyl hydrolase 18 family.

It is found in the secreted. Its function is as follows. Catalytically impaired chitinase that binds efficiently to chitin, but not to chitosan, xylan, or cellulose. Despite the lack of chitinolytic activity, retains substrate binding specificity and acts as an effector to prevent chitin-triggered immunity by sequestering immunogenic chitin fragments. The protein is chitinase-like effector (Chi) of Moniliophthora roreri (Frosty pod rot fungus).